The sequence spans 186 residues: Ribosome-recycling factor (186 aa).

This sequence belongs to the RRF family.

It localises to the cytoplasm. In terms of biological role, responsible for the release of ribosomes from messenger RNA at the termination of protein biosynthesis. May increase the efficiency of translation by recycling ribosomes from one round of translation to another. In Polaromonas sp. (strain JS666 / ATCC BAA-500), this protein is Ribosome-recycling factor.